The following is a 539-amino-acid chain: MRFDIKKVLELAEKDFETAWRETRALIKDKHIDNKYPRLKPVYGKPHPVMETIERLRQAYLRMGFEEMINPVIVDEMEIYKQFGPEAMAVLDRCFYLAGLPRPDVGLGNEKVEIIKNLGIDIDEEKKERLREVLHLYKKGAIDGDDLVFEIAKALNVSNEMGLKVLETAFPEFKDLKPESTTLTLRSHMTSGWFITLSSLIKKRKLPLKLFSIDRCFRREQREDRSHLMSYHSASCVVVGEDVSVDDGKVVAEGLLAQFGFTKFKFKPDEKKSKYYTPETQTEVYAYHPKLGEWIEVATFGVYSPIALAKYNIDVPVMNLGLGVERLAMIIYGYEDVRAMVYPQFYEYRLSDRDIAGMIRVDKVPILDEFYNFANELIDICIANKDKESPCSVEVKREFNFNGERRVIKVEIFENEPNKKLLGPSVLNEVYVYDGNIYGIPPTFEGVKEQYIPILKKAKEEGVSTNIRYIDGIIYKLVAKIEEALVSNVDEFKFRVPIVRSLSDINLKIDELALKQIMGENKVIDVRGPVFLNAKVEIK.

Substrate contacts are provided by residues 188 to 190 (HMT), 233 to 235 (SAS), 275 to 276 (YY), and Asn-319.

The protein belongs to the class-II aminoacyl-tRNA synthetase family. O-phosphoseryl-tRNA(Cys) synthetase subfamily. In terms of assembly, homotetramer. Interacts with SepCysS.

It catalyses the reaction tRNA(Cys) + O-phospho-L-serine + ATP = O-phospho-L-seryl-tRNA(Cys) + AMP + diphosphate. Catalyzes the attachment of O-phosphoserine (Sep) to tRNA(Cys). This is O-phosphoserine--tRNA(Cys) ligase (sepS) from Methanocaldococcus jannaschii (strain ATCC 43067 / DSM 2661 / JAL-1 / JCM 10045 / NBRC 100440) (Methanococcus jannaschii).